The following is a 105-amino-acid chain: Flagellar transcriptional regulator FlhD (105 aa).

It belongs to the FlhD family. As to quaternary structure, homodimer; disulfide-linked. Forms a heterohexamer composed of two FlhC and four FlhD subunits. Each FlhC binds a FlhD dimer, forming a heterotrimer, and a hexamer assembles by dimerization of two heterotrimers.

It is found in the cytoplasm. Functions in complex with FlhC as a master transcriptional regulator that regulates transcription of several flagellar and non-flagellar operons by binding to their promoter region. Activates expression of class 2 flagellar genes, including fliA, which is a flagellum-specific sigma factor that turns on the class 3 genes. Also regulates genes whose products function in a variety of physiological pathways. The sequence is that of Flagellar transcriptional regulator FlhD from Nitrosomonas europaea (strain ATCC 19718 / CIP 103999 / KCTC 2705 / NBRC 14298).